We begin with the raw amino-acid sequence, 302 residues long: Syntaxin-17 (302 aa).

S2 carries the N-acetylserine modification. The Cytoplasmic segment spans residues 2–228 (SEDEEKVKLR…KNLGKAAKYK (227 aa)). The residue at position 41 (K41) is an N6-acetyllysine. The stretch at 53–123 (EEHINAGRTV…EELKKQFNDE (71 aa)) forms a coiled coil. Residue Y157 is modified to Phosphotyrosine; by ABL1. The 63-residue stretch at 162–224 (IPRDQNAAES…EEGTKNLGKA (63 aa)) folds into the t-SNARE coiled-coil homology domain. Residues 229-249 (LAALPVAGALIGGVVGGPIGL) traverse the membrane as a helical segment. The necessary and sufficient for localization to autophagosome stretch occupies residues 229 to 275 (LAALPVAGALIGGVVGGPIGLLAGFKVAGIAAALGGGVLGFTGGKLI). Residues 250–254 (LAGFK) lie on the Lumenal side of the membrane. Residues 255 to 275 (VAGIAAALGGGVLGFTGGKLI) form a helical membrane-spanning segment. Topologically, residues 276–302 (QRRKQKMMEKLASSCPDLPSQTDKKCS) are cytoplasmic. Position 289 is a phosphoserine (S289). Positions 299 to 302 (KKCS) match the Endoplasmic reticulum retention signal motif.

The protein belongs to the syntaxin family. In terms of assembly, forms a SNARE complex composed of VAMP8, SNAP29 and STX17 involved in fusion of autophagosome with lysosome. May interact with VTI1B. Probably interacts with BET1, SCFD1 and SEC22B. Interacts with PTPN2 and ABL1; involved in STX17 phosphorylation. Interacts with COPB1. Interacts with TMED9 and TMED10; the interaction is direct. Interacts with VAMP7. Interacts with RUBCNL/PACER; promoting targeting of RUBCNL/PACER to autophagosome. Interacts with VAMP8, SNAP29, VPS39 and VPS41; these interactions are increased in the absence of TMEM39A. Interacts with IRGM; promoting STX17 recruitment to autophagosomes. Interacts with ATG8 proteins GABARAP and MAP1LC3B. Interacts with RNF115; this interaction enhances STX17 stability which in turn promotes autophagosome maturation. Interacts with RAB39A (GTP-bound); the interaction promotes autophagosome-lysosome membrane fusion driven by STX17-SNAP29-VAMP8. Interacts with RAB39B; the interaction may promote a different fonction in autophagy as compared with RAB39A. Post-translationally, phosphorylated at Tyr-157 probably by ABL1. Dephosphorylation by PTPN2; regulates exit from the endoplasmic reticulum.

The protein localises to the endoplasmic reticulum membrane. Its subcellular location is the smooth endoplasmic reticulum membrane. It is found in the endoplasmic reticulum-Golgi intermediate compartment membrane. It localises to the cytoplasmic vesicle. The protein resides in the autophagosome membrane. The protein localises to the COPII-coated vesicle membrane. Its subcellular location is the cytoplasm. It is found in the cytosol. It localises to the mitochondrion membrane. The protein resides in the autolysosome membrane. Functionally, SNAREs, soluble N-ethylmaleimide-sensitive factor-attachment protein receptors, are essential proteins for fusion of cellular membranes. SNAREs localized on opposing membranes assemble to form a trans-SNARE complex, an extended, parallel four alpha-helical bundle that drives membrane fusion. STX17 is a SNARE of the autophagosome involved in autophagy through the direct control of autophagosome membrane fusion with the lysosome membrane. May also play a role in the early secretory pathway where it may maintain the architecture of the endoplasmic reticulum-Golgi intermediate compartment/ERGIC and Golgi and/or regulate transport between the endoplasmic reticulum, the ERGIC and the Golgi. The chain is Syntaxin-17 from Bos taurus (Bovine).